The chain runs to 374 residues: Spore germination protein GerLB (374 aa).

10 consecutive transmembrane segments (helical) span residues 16-36, 44-64, 86-106, 122-142, 149-169, 192-212, 227-247, 279-301, 313-333, and 341-361; these read IGFA…PRDI, DGWI…WFVT, PVAY…TAYE, TPIQ…IAGS, LNVL…LLNI, VKNS…AVLL, AVMV…SVFT, FFTT…ASLL, IFIF…SSLN, and YLAW…LIVY.

The protein belongs to the amino acid-polyamine-organocation (APC) superfamily. Spore germination protein (SGP) (TC 2.A.3.9) family.

It is found in the membrane. In terms of biological role, contributes to the L-alanine germination response. In Bacillus cereus, this protein is Spore germination protein GerLB (gerLB).